Here is an 85-residue protein sequence, read N- to C-terminus: High-potential iron-sulfur protein (85 aa).

[4Fe-4S] cluster-binding residues include Cys-43, Cys-46, Cys-63, and Cys-77.

This sequence belongs to the high-potential iron-sulfur protein (HiPIP) family. In terms of assembly, homodimer.

The protein resides in the periplasm. Functionally, specific class of high-redox-potential 4Fe-4S ferredoxins. Functions in anaerobic electron transport in most purple and in some other photosynthetic bacteria and in at least one genus (Paracoccus) of halophilic, denitrifying bacteria. This chain is High-potential iron-sulfur protein, found in Allochromatium warmingii (Chromatium warmingii).